We begin with the raw amino-acid sequence, 138 residues long: Large ribosomal subunit protein uL16 (138 aa).

The protein belongs to the universal ribosomal protein uL16 family. Part of the 50S ribosomal subunit.

Its function is as follows. Binds 23S rRNA and is also seen to make contacts with the A and possibly P site tRNAs. This Rubrobacter xylanophilus (strain DSM 9941 / JCM 11954 / NBRC 16129 / PRD-1) protein is Large ribosomal subunit protein uL16.